The primary structure comprises 515 residues: Fatty acyl-CoA reductase 1 (515 aa).

The Cytoplasmic portion of the chain corresponds to 1 to 465 (MLSIPEFYQG…ARKHLNKLRN (465 aa)). Residues 466 to 484 (IRYGFNTILVVLIWRVFIA) traverse the membrane as a helical segment. The Peroxisomal segment spans residues 485-515 (RSQMARNIWYFVVSMCFKFLSYFRASSTMRY).

The protein belongs to the fatty acyl-CoA reductase family.

It is found in the peroxisome membrane. The enzyme catalyses a long-chain fatty acyl-CoA + 2 NADPH + 2 H(+) = a long-chain primary fatty alcohol + 2 NADP(+) + CoA. The catalysed reaction is hexadecanoyl-CoA + 2 NADPH + 2 H(+) = hexadecan-1-ol + 2 NADP(+) + CoA. It carries out the reaction octadecanoyl-CoA + 2 NADPH + 2 H(+) = octadecan-1-ol + 2 NADP(+) + CoA. It catalyses the reaction (9Z)-octadecenoyl-CoA + 2 NADPH + 2 H(+) = (9Z)-octadecen-1-ol + 2 NADP(+) + CoA. The enzyme catalyses (9Z,12Z)-octadecadienoyl-CoA + 2 NADPH + 2 H(+) = (9Z,12Z)-octadecadien-1-ol + 2 NADP(+) + CoA. The catalysed reaction is eicosanoyl-CoA + 2 NADPH + 2 H(+) = eicosan-1-ol + 2 NADP(+) + CoA. It carries out the reaction 16-methylheptadecanoyl-CoA + 2 NADPH + 2 H(+) = 16-methylheptadecan-1-ol + 2 NADP(+) + CoA. It catalyses the reaction 18-methylnonadecanoyl-CoA + 2 NADPH + 2 H(+) = 18-methylnonadecan-1-ol + 2 NADP(+) + CoA. Functionally, catalyzes the reduction of saturated and unsaturated C16 or C18 fatty acyl-CoA to fatty alcohols. It plays an essential role in the production of ether lipids/plasmalogens which synthesis requires fatty alcohols. In parallel, it is also required for wax monoesters production since fatty alcohols also constitute a substrate for their synthesis. In Xenopus laevis (African clawed frog), this protein is Fatty acyl-CoA reductase 1 (far1).